The following is a 192-amino-acid chain: Imidazoleglycerol-phosphate dehydratase (192 aa).

It belongs to the imidazoleglycerol-phosphate dehydratase family.

Its subcellular location is the cytoplasm. The catalysed reaction is D-erythro-1-(imidazol-4-yl)glycerol 3-phosphate = 3-(imidazol-4-yl)-2-oxopropyl phosphate + H2O. The protein operates within amino-acid biosynthesis; L-histidine biosynthesis; L-histidine from 5-phospho-alpha-D-ribose 1-diphosphate: step 6/9. The chain is Imidazoleglycerol-phosphate dehydratase from Staphylococcus saprophyticus subsp. saprophyticus (strain ATCC 15305 / DSM 20229 / NCIMB 8711 / NCTC 7292 / S-41).